Reading from the N-terminus, the 6269-residue chain is MAQSTVSCYLPNFGATCDGPKRPLSLKLRTDALQSSGLLSAWREGQLTQLLQASWALILHRYTGSEDICFGYHQIGNVSQDLLQSLEAVDPALCKVSVKEGISLKMFFDQFKTHNSPDSPLEIDRSSRKASENARLYNTILMIQICHDSNGTSPAIPLPSSLPIALPQEVSTERLVLYLPVQPSETYLQSRVRLHVKVLQDEVNIFFEWWNNDMPTAQMKSIAGAFGHILTDLLAANDTAVDDLDIFPENDWSRVCSFNSVLPKKHERCIHEMIYDRTLLQPENEAVCSWDGSLTYKELDLLSSKVAYDLQQRGVGPEVCVALCFEKSKWYTVAMLAVLKAGGAFVPMDPSHPTARLQSLVEGVQAHIMLCSRSQTGKLQTVAETLIPLDEETVDGLPDLPTSTFSSTTVKSSNAAYVIFTSGSTGQPKGTLLEHRAYVSGALAHGPVFGLNSSTRVLQFASHAFDASLVDILSSLIFGSCICIPSEEARLNDIAGVINEMKVNHASLTPSFVGFLDPAAVPGLESLVLAGEAMSPQHLATWSHIKLVNGYGPTESSVAAALNPNMSSSSDCRDIGLPVGVRFWVVNPANHDQLVPVGCPGELVLEGPTLARCYINNPQKTSDSFIFNPCWTKRDPNGGSDRRFYKTGDLVRYNSESGSLTYIGRKDAQVKFHGQRVELGEIESQLSADTDIKHCTVLLPKSGFAQGKLVTVVSLSAGPGQALEADAVPLKLIEHREKLRYVKSIQERLSIRLPTYMVPGVWLCVEALPMLVSGKLDRKSIATWVASMSEDPEVHATEAANARAANSTEDQLVSIWSRVLNVPKDRISVDESFLSLGGDSIAAITCVGHCKKQGIGLTVQEILRSKSIRELATRVKGVTQPVAYHEMIEEPFGLSPIQKLHFMVRKEGQGYFNQSVVTRIDRQINDQDMRRAVEAVVMRHSMLRSRLVDPSTGNSLQLRITEDVAGSYRWRTHYMTAQNEIENAIAESQLCINAFVGPVFAVDFCYVDEDSHNLLSLVAHHLVVDIVSWRIILEDLEDFLLNPQGFVLQNSSLPFQTWCRLQDEQCESVAFENDVQLEDLPAPDLAYWGMEHRQMTYGDVICETFELDPGSTQSILLECHQSLRTEPVDLFLAALVHSFGQTFPERTLPVIYNEGHGREVWDSSLDISRTVGWFTTLYPIFVQEIVSEDPARTVARVKDLRRQVSDNGRQKFASRMFTGKGQQTCRHHYPLEMTFNYVGQHRDLQKQDGLFQLMGHMAGEAGQGGGAADFGEETPRFALLEISALVVQGQLRFTFSFNRFMRHQSGIHAWISRCHQLLASLGQKLQSLAPQPTLSDFPMLSLTYEELDKMVSAKLPIAGITSLDLVEDVYPCSRMQQGILLSQSRNTSVYAVHDTFEVKGVGIKPSVDRLIIAWQKVVSRHAMLRTVFLENLTSQDLFCQVVLKEYNPAPALLSCSEERDVLPTFDNQQPVNYRDPRPAHRFSICETANGKLFCRLEISHAAMDGTSISLIVRDLQSAYSGQLQEDRKPMFKDYMRYLQSCSHSAGLNYWLPYLSDVKPCHFPVLNDGRPSNKRLQVIRLDFSSLKELQALCESCGLTLSTAFSTAWGLTLRSFCGSNEVCFSYMASLRDVSVDEIGSVVGPVINLLACRMKVTEDVCLEDVLHQVQNDYMESLPYRHTSLIDIQHALKLSDTILLNSGISYRKLPPKTLSNRDEMRLVEVGKIHDPAEFPVYVNIEATDDVAYIDLNYWTTSLSEGQAQNVASTFLQSLENIIHHHDEKICRLDQLSAQNKQQIAVWNNTLPKAVEKCIHEILEDKVKQCPEAVAIAAWDGNLTYAKLNELSSLLAFYLTKLGVGPGLLVPIDLDKSSWQIVAILAVLRAGGICLPVDAAQPYEFIEKLLIDKDIQVALASPNKAQLLERTIPYVVPVGRSLFDYLPRFDDMPHVSHKAMDHAYVVFTGGSVKEPKGVMLQHLTVLTRAENFASALELNKATKVYQSATYTSDMFLNVLFGTMMRGGCVCIPANDGFNNLPRSINASRANTVVMTPSLASLLQPSEVPEVQLLALYGEILTNQVRTIWSEKVRTHSLYGAAECSSSCIHASDCQTLGETRNLGLAAGCITWLVNLSDHDLLVPIGSVGEVVIEGPVIASGYLLHNGHVKGGFIENPVWRMNFERDEPSNDLEKRDESSTLTRRMFKTGDLARYNSDGILVYMGRKERQTQRLQADIWDVQQCIDTFSLPGHPCVVEPIRCLDDDESVEHLAVFVQFASTHLEKADGQRSVIGQPSSQFFDSVTKMHTYLLSVLPVTQVPRLYIPVPSMPLTSTGLLDRWFLRNEAQNLPAQTRIEFDLKSFHDFWRVELAHPKPSPSQLLPSSTSATHRSSGTSTYEWNGHIEWRDISKLESASLEAALLAAWALTISGYTRSDDVIFGELLLEQDSSGLDSTSDKAAPVVVPRRLQIAEDMSIAELMRKTQERLVAASPFQRAGLQRIRNVSADTSRACSFNNLFCFTRFDCKVQTLALAYPLGIFCIVANSELQLSACYDEQILSAPQVERILVQFARYVEYLKADLRSQETIGDMALRKNQTSYLSSPETVYWRKYLADVESCVFPSLNPDGERSGFSSAKLAIENLADLRRLCQKIEVTEDIVLQLVWGLVLRCYTGSEEVCYGYYQASPQPEGSKYLKVLPSRFLLKDDSDLESIAQQRKSELDEAMEHPISQIELQLELGFDWYSLLNTVFKFDRFAELPNDNNSTLDLLNDTEKGIWTIVVNPRFSFVSADILFEYRTDALSEANITSVVDCFQHILEEIINNDPVGHKIGDINFFGERACQQVREWNAALPERPDRCAHEIIEQQVLSHPTSPAICSWDGEFTYEQLDRLSTKLAKHLVCLGVKPEIFVGLCFEKSAWAVIAQVAVLKAGGAFASLDPSHPDARLRGLVDDIGAHIFLCSAKYLDKARQISRAAYIVSEETLAELPDVSSTASMTRPSIHNAAYAIFTSGTTGKPKVTVLEHIALSVSSPAFARSMGMDTTTRALQFSSYTFDVSIKEIIIVLMTGGCVCVPSDEERMNDLSGAIRRLNANFISCPPSVSNTIQPESVPSVKTVVMGGEKMTASHIDRWGDRFVINAYGPSESTVMATMSVKVDEAGVRVNNDCNSIGAAICGRTWVVDPNNYQRLLPIGAVGELVLEGCNVARGYLNNDQKTKESFISDPAWTKAPGLKELFKRKERMYRTGDLVRYNPDGTICFISRKDTQIKFNGQRIELEEIEQQCISFLSGGTQVAVEVVEPESKAVARSIAAFFTVDNQSGQDRPDLESQLLVPMSEATREKVQKLREALIKALPPIMIPRLFFPVSHLPFSNSGKLDRKKLRATVETLPKDQLKSYATLTAGSRQASDEGVEGTLRSLWEEALGLASGSVSAEDSFFSLGGDSFSAMKLVGAANSQGISLTFADVYEDPVFMNMAKRCGMLQGRSGRQTVTPFSLLPASVDREQLLEEVAEQCGVPRASIVDLYPCSPVQEGLLTLSVKQNGAYIAQPIFRLSEGIDLDMFKAAWQQVVDELDILRTRIVHTESLNFLQAVIDKEEISWASATTLDELTAESPELPRHNGGRLTGYAIAASQTGRYFCWTIHHALYDGWSIPLVLRRVEEVYTNSTASARTVPYSLFINYLLERSMADSDEYWKSQLANLSCSPFPQSRNPLPDSVRVGNRHHSSMKISRAASGVDLTIPELIRAAWAIVVSAHTGSSDVCFGETLMGRNIDLAGVTDIAGPVLTTVPTRIQVDNELPITQYLENMHHLTTTMLPHQHSGLQQIRKLNSDTASACEFQNLLVIQTGEGQLNKALWVAEPIQTSGDFFTHPLVVECKVDTSEVSITMHHDEIVLNSWQTEKLIGQFSFVLEQLLSINKGETRKLSELEIFSPLDSKEVALWNKRHPEAVEKCAHDIISERCSTHPDAPAVCAWDGEVSYKEMYTLASSFASYLACRGVGPETLVPICLDKSLWAIITILGILIAGGAYVPLDPAHPTSRHEEILTEVDARILICSPQYQSRYSSIVKTIIPVSKETIRAYFALNYQAKGLRRVTPFNMAYAIFTSGSTGRAKGIIIDHRALASSAMAFGPIVHLNETSRAFQFASLTFDAAVMEILATLMHGGCICIPSEDERLNDVAGAIRRMNVTWTFLTPSIASIIEPSTVPSLEVLACGGEKLSREVVTKWAHRVKLINGYGPTETTIFAVLNNVSPTTDPACIGYGIPCTLTWVVDPENHDRLTPLGAIGELALEGPALAREYLKNPKKTAEAFVDEPAWMKHFQSTLPSPRRIYKTGDLVRYNPDGSVEYISRKDYQVKLHGQRMELGEIEHRLHEDDRVRHAIVILPKEGLLKGRLVTILSLNSLKSGSSIISDNACELISREDLARVAYSELITIQKNLEAQLPIYMVPQTWAVIKKLPMLVSGKLDRKKITHWIENIDEPTYDRIMQDYDNIKRGHVEDSVNEDKSTAAKILQDIYAQVLNLPSNKVDPKRSFVSLGGDSITGMAVISRARKQGLNLTLHKILQSKSIVELIQAAEVETSSIQVEEKANKYFSLSPIQNLYFKSARTFKETGRFNQGMTVRVTRKVEPNVVKDALKAVASQHSMLRARFSRSANGKWQQRITNDIESSVRVGIHSVMSSHEMLGKIANTQSSLDIENGPIIAADLFTVNGEQVLFLVANHLCVDMVSWRIILQDIQEVIEAGSLSSEKPFSFQSWCELQLENSRSEADKAKLPFAIEPPNLSYWGMESVPNHYGQIRMESFVVGEDTTSFILGDCHEMLRTETIDILLAAVAQSFRRVFTDRRMPTIYNEGHGRESWDSNLDLSRTVGWFTTLCPLQVDECSGSDFVDTTKRVKDLRRKIKDNGRSYFARSLLQANNTEPSDFPVPLEIVFNYLGRLQQLERDDSLFKHYGEAFDEEKFRLAGDMGSDTPRFALLEISALVVNDKLQVSFTYNRQMQRESQIFQWISECRRVLEIDVLRFKDTVPEPTLSDFPLLPITYDGLKKLTSTTLPRAGVKTFSQVEDIYPCSSVQEGILLSQLRDPSAYMFHVIFEVRSPGGSGKVDPNMLRSAWSAVINRHPILRTLFIDSNYANGTFDQLVLRKVDEGAIILHCNDSDALVKLDTIKLSEINAGRCPKLLHQLTVCSTDSGRVLIKLEMNHAIIDGGSVDLLLRDLAMAYKHQLPEGSGPHFSDYIKFVRGKSQSQALSHWRQYLSDAHPCHLTFSEGTGGSRQLGSVMVPFSRYSELQQFCEKNSVTLANLTLAAWAIVLQSFTGSNDVCFGYPSAGRDAPVPGIQDAVGIFLNMLCCRVRFSPGKTLLEVSKTVQDDYIKNLPYQDCSLASIQHELGQKELFNTTISIQNHHAVSEESGNDLLSFDVQTAHDPTEYPVTVNVETAKGHEGILLRYWTDAVPEDKANNLANAIAHIFSCFIDKPSQLVSELDLRGGQLMKGGQFIDSKSLQELIDRRVTEIISQMLKEGTLAIPAADNGKGQFKGTTRAQPAKVTIKARGMHRERDLSDSTATLTEDHSKLMEPEKRLWKIWCSALGLASDTIQRQASFFKLGGDSITAMKMVSAAREDGLTLTMADVFNNPVFEDMLAAISASNSSSALEPDSPADSNNEKPAEPPRLVELERNPPPPEISLLKTVPLNDSALQDGICPKIGVFKGGIADVLPVTDFQAMSITATLFKSRWMLNYFFFDGRGSLDLRRLRESLLRVVDAFDILRTVFVCFNGQFFQVVLRKIRPNIFVHETEKNLDEYTEYLQQQDREQEARQGEQYVKFYIVKKKGSNHHRILIRMSHAQFDGLCLPTIMSAIKLGYEGSTLPPAPSFANYMRMLSGAITPDHYQHWTNLLKGSKMTQVIRRTEENTYRYIGAFREQRKTLEIQPSVLENVTIATVMQAAWAVTLAKLSAQSDVVFGLTISGRNTSIPGIENTVGPCLNVIPIRVTFKEGWTGVDLFRYLQDQQIANMPFEALGFREIIRRCTDWPSSTYFTTSVFHQNVEYEGQMQLDNTTYRMGGAGVVDNFTDMTLFSKSSSDGKLGVSLGYSDKGPIGPKFAAKVLSMVCDTVQSLLANSRVGLPSPSMLRSLPCQSVHDVPGMTDEMFLSTHLKDRSISDILVHSDVVTQAWQQVLPRNNADEPQSSFQLDSSFFELGGDVFDMAQVVWLLEQEGLQVHIEDLLEHPTFLGQMAVLTLHNSRTSDSMEEIVPVEEIPLPAARTGTSSSLGKALTLAKKVTRWSALSARG.

The segment at 249 to 781 is adenylation 1; that stretch reads ENDWSRVCSF…VSGKLDRKSI (533 aa). One can recognise a Carrier 1 domain in the interval 803–879; that stretch reads RAANSTEDQL…ELATRVKGVT (77 aa). Position 840 is an O-(pantetheine 4'-phosphoryl)serine (S840). Residues 894 to 1342 form an epimerase 1 region; that stretch reads LSPIQKLHFM…TLSDFPMLSL (449 aa). The interval 1373–1775 is condensation 1; sequence SRMQQGILLS…FLQSLENIIH (403 aa). An adenylation 2 region spans residues 1725 to 2333; it reads HDPAEFPVYV…TGLLDRWFLR (609 aa). The disordered stretch occupies residues 2364–2386; the sequence is KPSPSQLLPSSTSATHRSSGTST. Residues 2367-2376 show a composition bias toward low complexity; it reads PSQLLPSSTS. Positions 2377-2386 are enriched in polar residues; that stretch reads ATHRSSGTST. The tract at residues 2597–2670 is condensation 2; that stretch reads WRKYLADVES…TGSEEVCYGY (74 aa). Residues 2845-3368 are adenylation 3; it reads RCAHEIIEQQ…SGKLDRKKLR (524 aa). One can recognise a Carrier 2 domain in the interval 3392–3468; that stretch reads ASDEGVEGTL…NMAKRCGMLQ (77 aa). S3429 is modified (O-(pantetheine 4'-phosphoryl)serine). A condensation 3 region spans residues 3512–3898; sequence CSPVQEGLLT…GQFSFVLEQL (387 aa). The adenylation 4 stretch occupies residues 3919-4454; the sequence is DSKEVALWNK…VSGKLDRKKI (536 aa). A Carrier 3 domain is found at 4487–4563; it reads EDKSTAAKIL…ELIQAAEVET (77 aa). S4524 carries the O-(pantetheine 4'-phosphoryl)serine modification. The epimerase 2 stretch occupies residues 4578-5024; the sequence is LSPIQNLYFK…DFPLLPITYD (447 aa). The interval 5052–5466 is condensation 4; it reads SSVQEGILLS…PSQLVSELDL (415 aa). One can recognise a Carrier 4 domain in the interval 5552–5628; that stretch reads SKLMEPEKRL…DMLAAISASN (77 aa). O-(pantetheine 4'-phosphoryl)serine is present on S5589. The segment at 5628 to 5658 is disordered; sequence NSSSALEPDSPADSNNEKPAEPPRLVELERN. Residues 5642–5657 are compositionally biased toward basic and acidic residues; the sequence is NNEKPAEPPRLVELER. The interval 5720 to 6067 is condensation 5; that stretch reads FFFDGRGSLD…SSSDGKLGVS (348 aa). The region spanning 6139-6220 is the Carrier 5 domain; it reads SDILVHSDVV…GQMAVLTLHN (82 aa).

Belongs to the NRP synthetase family. The thiolation domains are 4'-phosphopantetheinylated.

Functionally, nonribosomal peptide synthesis (NRPS) is a key mechanism responsible for the biosynthesis of bioactive metabolites which are potentially contributing to organismal virulence. Contributes to improved fungal tolerance against oxidative stress, during the infection process. This is Nonribosomal peptide synthetase 1 (NRPS1) from Aspergillus fumigatus (strain ATCC MYA-4609 / CBS 101355 / FGSC A1100 / Af293) (Neosartorya fumigata).